We begin with the raw amino-acid sequence, 189 residues long: Orotate phosphoribosyltransferase (189 aa).

5-phospho-alpha-D-ribose 1-diphosphate-binding positions include R99, K100, K103, H105, and 126–134 (EDVITTGGS). Residues T130 and R158 each contribute to the orotate site.

The protein belongs to the purine/pyrimidine phosphoribosyltransferase family. PyrE subfamily. Homodimer. Mg(2+) serves as cofactor.

The catalysed reaction is orotidine 5'-phosphate + diphosphate = orotate + 5-phospho-alpha-D-ribose 1-diphosphate. It participates in pyrimidine metabolism; UMP biosynthesis via de novo pathway; UMP from orotate: step 1/2. Functionally, catalyzes the transfer of a ribosyl phosphate group from 5-phosphoribose 1-diphosphate to orotate, leading to the formation of orotidine monophosphate (OMP). The protein is Orotate phosphoribosyltransferase of Thermosynechococcus vestitus (strain NIES-2133 / IAM M-273 / BP-1).